A 137-amino-acid chain; its full sequence is MNVKIIVEFIKKFAEENNCKKIAEIGIGFKFDVARELSKYFDLIAIDINEKAIEKAKLLGLNAYKDDLFNPNISLYKNIDLIYSIRPPRDLQPYILDLSKKVNANLIIRPLLNEMPIKELKLKNYKGEVFYIKEKQI.

It belongs to the UPF0146 family.

This chain is UPF0146 protein MJ0688, found in Methanocaldococcus jannaschii (strain ATCC 43067 / DSM 2661 / JAL-1 / JCM 10045 / NBRC 100440) (Methanococcus jannaschii).